Consider the following 96-residue polypeptide: uncharacterized protein (96 aa).

This is an uncharacterized protein from Enterobacteria phage T4 (Bacteriophage T4).